A 405-amino-acid polypeptide reads, in one-letter code: Farnesyl pyrophosphate synthase (405 aa).

Mg(2+) contacts are provided by Asp-158 and Asp-162. The DDXXD motif motif lies at 158-162 (DDLAD).

The protein belongs to the FPP/GGPP synthase family. Requires Mg(2+) as cofactor.

It catalyses the reaction isopentenyl diphosphate + (2E)-geranyl diphosphate = (2E,6E)-farnesyl diphosphate + diphosphate. Its pathway is pheromone biosynthesis. In terms of biological role, farnesyl pyrophosphate synthase involved in murgantiol biosynthesis, a male-released aggregation pheromone, by catalyzing the formation of (2E,6E)-farnesyl diphosphate. This is Farnesyl pyrophosphate synthase from Murgantia histrionica (Harlequin bug).